A 1138-amino-acid chain; its full sequence is Eukaryotic translation initiation factor 3 subunit A (1138 aa).

In terms of domain architecture, PCI spans 319–502 (LQRMAAHVLL…NSIYFGTDLT (184 aa)). Disordered stretches follow at residues 590–633 (NNAR…NEIQ) and 817–1138 (ERFR…VKRR). Composition is skewed to basic and acidic residues over residues 817–903 (ERFR…RVER), 923–967 (DRNE…KEND), 1003–1049 (GRDD…DQPQ), and 1058–1078 (DSPR…RDVR). Residues 1082–1100 (PKEGGGGVSGGGAGGGGGN) show a composition bias toward gly residues. Residues 1107–1128 (PREEKAPPKREQAQDKENKAGD) show a composition bias toward basic and acidic residues.

It belongs to the eIF-3 subunit A family. Component of the eukaryotic translation initiation factor 3 (eIF-3) complex. The eIF-3 complex interacts with pix.

Its subcellular location is the cytoplasm. In terms of biological role, RNA-binding component of the eukaryotic translation initiation factor 3 (eIF-3) complex, which is involved in protein synthesis of a specialized repertoire of mRNAs and, together with other initiation factors, stimulates binding of mRNA and methionyl-tRNAi to the 40S ribosome. The eIF-3 complex specifically targets and initiates translation of a subset of mRNAs involved in cell proliferation. This chain is Eukaryotic translation initiation factor 3 subunit A, found in Drosophila virilis (Fruit fly).